A 352-amino-acid chain; its full sequence is Holliday junction branch migration complex subunit RuvB (352 aa).

The segment at 1-26 (MIETDKLRAAAPERLISPQPADRQED) is disordered. The segment at 4-193 (TDKLRAAAPE…FGIVSRLEFY (190 aa)) is large ATPase domain (RuvB-L). Residues Leu32, Arg33, Gly74, Lys77, Thr78, Thr79, 140 to 142 (EDF), Arg183, Tyr193, and Arg230 contribute to the ATP site. Thr78 contributes to the Mg(2+) binding site. The segment at 194-264 (TPDELGFIVS…VADAALRMLD (71 aa)) is small ATPAse domain (RuvB-S). Residues 267–352 (SLGLDLMDRK…RPGGTDLFGG (86 aa)) form a head domain (RuvB-H) region. Positions 322 and 327 each coordinate DNA.

It belongs to the RuvB family. Homohexamer. Forms an RuvA(8)-RuvB(12)-Holliday junction (HJ) complex. HJ DNA is sandwiched between 2 RuvA tetramers; dsDNA enters through RuvA and exits via RuvB. An RuvB hexamer assembles on each DNA strand where it exits the tetramer. Each RuvB hexamer is contacted by two RuvA subunits (via domain III) on 2 adjacent RuvB subunits; this complex drives branch migration. In the full resolvosome a probable DNA-RuvA(4)-RuvB(12)-RuvC(2) complex forms which resolves the HJ.

The protein resides in the cytoplasm. The catalysed reaction is ATP + H2O = ADP + phosphate + H(+). In terms of biological role, the RuvA-RuvB-RuvC complex processes Holliday junction (HJ) DNA during genetic recombination and DNA repair, while the RuvA-RuvB complex plays an important role in the rescue of blocked DNA replication forks via replication fork reversal (RFR). RuvA specifically binds to HJ cruciform DNA, conferring on it an open structure. The RuvB hexamer acts as an ATP-dependent pump, pulling dsDNA into and through the RuvAB complex. RuvB forms 2 homohexamers on either side of HJ DNA bound by 1 or 2 RuvA tetramers; 4 subunits per hexamer contact DNA at a time. Coordinated motions by a converter formed by DNA-disengaged RuvB subunits stimulates ATP hydrolysis and nucleotide exchange. Immobilization of the converter enables RuvB to convert the ATP-contained energy into a lever motion, pulling 2 nucleotides of DNA out of the RuvA tetramer per ATP hydrolyzed, thus driving DNA branch migration. The RuvB motors rotate together with the DNA substrate, which together with the progressing nucleotide cycle form the mechanistic basis for DNA recombination by continuous HJ branch migration. Branch migration allows RuvC to scan DNA until it finds its consensus sequence, where it cleaves and resolves cruciform DNA. The protein is Holliday junction branch migration complex subunit RuvB of Azoarcus sp. (strain BH72).